The primary structure comprises 481 residues: Xylulose kinase (481 aa).

Position 81-82 (glutamine 81–histidine 82) interacts with substrate. Catalysis depends on aspartate 239, which acts as the Proton acceptor.

This sequence belongs to the FGGY kinase family.

The enzyme catalyses D-xylulose + ATP = D-xylulose 5-phosphate + ADP + H(+). Its function is as follows. Catalyzes the phosphorylation of D-xylulose to D-xylulose 5-phosphate. This is Xylulose kinase from Streptomyces coelicolor (strain ATCC BAA-471 / A3(2) / M145).